The sequence spans 469 residues: Neuraminidase (469 aa).

Residues 1–9 (MNPNQKIIT) are Intravirion-facing. The chain crosses the membrane as a helical span at residues 10-30 (IGSVSLTIATICFLMQIAILV). The interval 11-33 (GSVSLTIATICFLMQIAILVTTV) is involved in apical transport and lipid raft association. The Virion surface portion of the chain corresponds to 31–469 (TTVTLHFKQY…DGADINLMPI (439 aa)). The tract at residues 36 to 88 (HFKQYECDSPANNQVMPCEPIIIERNITEIVYLTNTTIEKEICPKLVEYRNWS) is hypervariable stalk region. N-linked (GlcNAc...) asparagine; by host glycosylation is found at N61, N70, and N86. Positions 91–469 (QCKITGFAPF…DGADINLMPI (379 aa)) are head of neuraminidase. Disulfide bonds link C92-C417, C124-C129, C183-C230, C232-C237, C278-C291, C280-C289, C318-C337, and C421-C447. R118 is a binding site for substrate. N-linked (GlcNAc...) asparagine; by host glycosylation is present at N146. The Proton donor/acceptor role is filled by D151. R152 contacts substrate. N-linked (GlcNAc...) asparagine; by host glycans are attached at residues N200 and N234. 276 to 277 (EE) provides a ligand contact to substrate. R292 contacts substrate. The Ca(2+) site is built by D293, G297, and D324. R371 contributes to the substrate binding site. Y406 acts as the Nucleophile in catalysis.

Belongs to the glycosyl hydrolase 34 family. As to quaternary structure, homotetramer. It depends on Ca(2+) as a cofactor. In terms of processing, N-glycosylated.

The protein resides in the virion membrane. It is found in the host apical cell membrane. It catalyses the reaction Hydrolysis of alpha-(2-&gt;3)-, alpha-(2-&gt;6)-, alpha-(2-&gt;8)- glycosidic linkages of terminal sialic acid residues in oligosaccharides, glycoproteins, glycolipids, colominic acid and synthetic substrates.. Inhibited by the neuraminidase inhibitors zanamivir (Relenza) and oseltamivir (Tamiflu). These drugs interfere with the release of progeny virus from infected cells and are effective against all influenza strains. Resistance to neuraminidase inhibitors is quite rare. Its function is as follows. Catalyzes the removal of terminal sialic acid residues from viral and cellular glycoconjugates. Cleaves off the terminal sialic acids on the glycosylated HA during virus budding to facilitate virus release. Additionally helps virus spread through the circulation by further removing sialic acids from the cell surface. These cleavages prevent self-aggregation and ensure the efficient spread of the progeny virus from cell to cell. Otherwise, infection would be limited to one round of replication. Described as a receptor-destroying enzyme because it cleaves a terminal sialic acid from the cellular receptors. May facilitate viral invasion of the upper airways by cleaving the sialic acid moieties on the mucin of the airway epithelial cells. Likely to plays a role in the budding process through its association with lipid rafts during intracellular transport. May additionally display a raft-association independent effect on budding. Plays a role in the determination of host range restriction on replication and virulence. Sialidase activity in late endosome/lysosome traffic seems to enhance virus replication. The sequence is that of Neuraminidase from Aves (whales).